We begin with the raw amino-acid sequence, 187 residues long: Elongation factor P (187 aa).

This sequence belongs to the elongation factor P family.

The protein resides in the cytoplasm. Its pathway is protein biosynthesis; polypeptide chain elongation. In terms of biological role, involved in peptide bond synthesis. Stimulates efficient translation and peptide-bond synthesis on native or reconstituted 70S ribosomes in vitro. Probably functions indirectly by altering the affinity of the ribosome for aminoacyl-tRNA, thus increasing their reactivity as acceptors for peptidyl transferase. This chain is Elongation factor P (efp), found in Mycobacterium bovis (strain ATCC BAA-935 / AF2122/97).